The following is a 147-amino-acid chain: 3-hydroxyacyl-[acyl-carrier-protein] dehydratase FabZ (147 aa).

The active site involves histidine 46.

Belongs to the thioester dehydratase family. FabZ subfamily.

Its subcellular location is the cytoplasm. It catalyses the reaction a (3R)-hydroxyacyl-[ACP] = a (2E)-enoyl-[ACP] + H2O. In terms of biological role, involved in unsaturated fatty acids biosynthesis. Catalyzes the dehydration of short chain beta-hydroxyacyl-ACPs and long chain saturated and unsaturated beta-hydroxyacyl-ACPs. The sequence is that of 3-hydroxyacyl-[acyl-carrier-protein] dehydratase FabZ from Syntrophobacter fumaroxidans (strain DSM 10017 / MPOB).